The primary structure comprises 346 residues: Holliday junction branch migration complex subunit RuvB (346 aa).

Positions 1-181 (MSDRNPLIDA…FGIPVRLNFY (181 aa)) are large ATPase domain (RuvB-L). Residues Leu-20, Arg-21, Gly-62, Lys-65, Thr-66, Thr-67, 128 to 130 (EDF), Arg-171, Tyr-181, and Arg-218 contribute to the ATP site. Residue Thr-66 participates in Mg(2+) binding. The interval 182–252 (TVEELEYIVR…IADEALSRLE (71 aa)) is small ATPAse domain (RuvB-S). The tract at residues 255–346 (NRGLDQLDRR…SQYGLFMEDE (92 aa)) is head domain (RuvB-H). Positions 291, 310, and 315 each coordinate DNA.

It belongs to the RuvB family. In terms of assembly, homohexamer. Forms an RuvA(8)-RuvB(12)-Holliday junction (HJ) complex. HJ DNA is sandwiched between 2 RuvA tetramers; dsDNA enters through RuvA and exits via RuvB. An RuvB hexamer assembles on each DNA strand where it exits the tetramer. Each RuvB hexamer is contacted by two RuvA subunits (via domain III) on 2 adjacent RuvB subunits; this complex drives branch migration. In the full resolvosome a probable DNA-RuvA(4)-RuvB(12)-RuvC(2) complex forms which resolves the HJ.

Its subcellular location is the cytoplasm. The enzyme catalyses ATP + H2O = ADP + phosphate + H(+). In terms of biological role, the RuvA-RuvB-RuvC complex processes Holliday junction (HJ) DNA during genetic recombination and DNA repair, while the RuvA-RuvB complex plays an important role in the rescue of blocked DNA replication forks via replication fork reversal (RFR). RuvA specifically binds to HJ cruciform DNA, conferring on it an open structure. The RuvB hexamer acts as an ATP-dependent pump, pulling dsDNA into and through the RuvAB complex. RuvB forms 2 homohexamers on either side of HJ DNA bound by 1 or 2 RuvA tetramers; 4 subunits per hexamer contact DNA at a time. Coordinated motions by a converter formed by DNA-disengaged RuvB subunits stimulates ATP hydrolysis and nucleotide exchange. Immobilization of the converter enables RuvB to convert the ATP-contained energy into a lever motion, pulling 2 nucleotides of DNA out of the RuvA tetramer per ATP hydrolyzed, thus driving DNA branch migration. The RuvB motors rotate together with the DNA substrate, which together with the progressing nucleotide cycle form the mechanistic basis for DNA recombination by continuous HJ branch migration. Branch migration allows RuvC to scan DNA until it finds its consensus sequence, where it cleaves and resolves cruciform DNA. The chain is Holliday junction branch migration complex subunit RuvB from Brucella melitensis biotype 2 (strain ATCC 23457).